The sequence spans 61 residues: Large ribosomal subunit protein bL32 (61 aa).

Over residues 1 to 22 the composition is skewed to basic residues; sequence MAVPKKKTSKSRRDMRRSHHAL. Residues 1–27 are disordered; sequence MAVPKKKTSKSRRDMRRSHHALKPSAY.

This sequence belongs to the bacterial ribosomal protein bL32 family.

The sequence is that of Large ribosomal subunit protein bL32 from Rhodospirillum rubrum (strain ATCC 11170 / ATH 1.1.1 / DSM 467 / LMG 4362 / NCIMB 8255 / S1).